A 319-amino-acid polypeptide reads, in one-letter code: L-lactate dehydrogenase (319 aa).

Residues valine 17, aspartate 38, lysine 43, tyrosine 69, and 83-84 (GA) contribute to the NAD(+) site. The substrate site is built by glutamine 86 and arginine 92. NAD(+) contacts are provided by residues threonine 105, 122-124 (ATN), and serine 147. 124–127 (NPVD) contributes to the substrate binding site. Position 152–155 (152–155 (DTAR)) interacts with substrate. Beta-D-fructose 1,6-bisphosphate contacts are provided by arginine 157 and histidine 172. The Proton acceptor role is filled by histidine 179. A Phosphotyrosine modification is found at tyrosine 224. Residue threonine 233 coordinates substrate.

This sequence belongs to the LDH/MDH superfamily. LDH family. In terms of assembly, homotetramer.

The protein resides in the cytoplasm. It carries out the reaction (S)-lactate + NAD(+) = pyruvate + NADH + H(+). It participates in fermentation; pyruvate fermentation to lactate; (S)-lactate from pyruvate: step 1/1. With respect to regulation, allosterically activated by fructose 1,6-bisphosphate (FBP). Catalyzes the conversion of lactate to pyruvate. This chain is L-lactate dehydrogenase, found in Geobacillus sp. (strain WCH70).